The chain runs to 115 residues: MFVYTTIMLLLLAEINHSQGCSGLCKINESPQTNIDYRICGDQITQKYTELCGNPAAGRRNRITGLDQRSIFESNLLAKRFLISRRQIVNNRRTDIVEECCAEGCKAEEVKEYCI.

The signal sequence occupies residues 1–20; sequence MFVYTTIMLLLLAEINHSQG. Intrachain disulfides connect cysteine 40-cysteine 101, cysteine 52-cysteine 114, and cysteine 100-cysteine 105. Positions 59–93 are cleaved as a propeptide — c peptide; the sequence is RRNRITGLDQRSIFESNLLAKRFLISRRQIVNNRR.

The protein belongs to the insulin family. As to expression, expressed in tentacles.

Its subcellular location is the secreted. Functionally, heterodimer with unknown function. Surprisingly, the truncated synthetic analog (dimer of 27-58 and 94-115) does not bind to long insulin receptor (HIR-B) and insulin-like growth factor 1 receptor. This truncated synthetic analog shows very weak inhibitory activity on different voltage-gated channels. The polypeptide is Insulin-like peptide IlO1_i1 (Oulactis sp. (Sea anemone)).